Here is a 276-residue protein sequence, read N- to C-terminus: tRNA (guanine-N(7)-)-methyltransferase (276 aa).

A disordered region spans residues 1–36; that stretch reads MAAETRNVAGAEAPPPQKRYYRQRAHSNPMADHTLR. At A2 the chain carries N-acetylalanine. Position 27 is a phosphoserine; by PKB/AKT1 and RPS6KA3 (S27). The S-adenosyl-L-homocysteine site is built by G84, E107, I108, R109, N140, A141, and L160. S-adenosyl-L-methionine contacts are provided by G84 and E107. 4 residues coordinate S-adenosyl-L-methionine: R109, N140, A141, and L160. The active site involves D163. The alphaC helix stretch occupies residues 164–172; that stretch reads PHFKRTKHK. Residues T238 and E240 each contribute to the S-adenosyl-L-homocysteine site. T238 and E240 together coordinate S-adenosyl-L-methionine. The alpha6 helix stretch occupies residues 238–246; the sequence is TEEGKKVLR.

The protein belongs to the class I-like SAM-binding methyltransferase superfamily. TrmB family. In terms of assembly, catalytic component of the METTL1-WDR4 complex, composed of METTL1 and WDR4. In terms of processing, phosphorylation at Ser-27 by PKB/AKT1 inactivates its methyltransferase activity via a steric interference mechanism in the active site that locally disrupts the catalytic center. Phosphorylation at Ser-27 does not affect the interaction with WDR4. Ubiquitous.

It localises to the nucleus. The enzyme catalyses guanosine(46) in tRNA + S-adenosyl-L-methionine = N(7)-methylguanosine(46) in tRNA + S-adenosyl-L-homocysteine. The catalysed reaction is a guanosine in mRNA + S-adenosyl-L-methionine = an N(7)-methylguanosine in mRNA + S-adenosyl-L-homocysteine. It carries out the reaction a guanosine in miRNA + S-adenosyl-L-methionine = an N(7)-methylguanosine in miRNA + S-adenosyl-L-homocysteine. It functions in the pathway tRNA modification; N(7)-methylguanine-tRNA biosynthesis. In terms of biological role, catalytic component of METTL1-WDR4 methyltransferase complex that mediates the formation of N(7)-methylguanine in a subset of RNA species, such as tRNAs, mRNAs and microRNAs (miRNAs). Catalyzes the formation of N(7)-methylguanine at position 46 (m7G46) in a large subset of tRNAs that contain the 5'-RAGGU-3' motif within the variable loop. M7G46 interacts with C13-G22 in the D-loop to stabilize tRNA tertiary structure and protect tRNAs from decay. Also acts as a methyltransferase for a subset of internal N(7)-methylguanine in mRNAs. Internal N(7)-methylguanine methylation of mRNAs in response to stress promotes their relocalization to stress granules, thereby suppressing their translation. Also methylates a specific subset of miRNAs, such as let-7. N(7)-methylguanine methylation of let-7 miRNA promotes let-7 miRNA processing by disrupting an inhibitory secondary structure within the primary miRNA transcript (pri-miRNA). Acts as a regulator of embryonic stem cell self-renewal and differentiation. This is tRNA (guanine-N(7)-)-methyltransferase from Homo sapiens (Human).